The sequence spans 178 residues: ATP-dependent protease subunit HslV (178 aa).

Residue T5 is part of the active site. Na(+) is bound by residues A160, C163, and T166.

The protein belongs to the peptidase T1B family. HslV subfamily. As to quaternary structure, a double ring-shaped homohexamer of HslV is capped on each side by a ring-shaped HslU homohexamer. The assembly of the HslU/HslV complex is dependent on binding of ATP.

It is found in the cytoplasm. It catalyses the reaction ATP-dependent cleavage of peptide bonds with broad specificity.. Its activity is regulated as follows. Allosterically activated by HslU binding. Functionally, protease subunit of a proteasome-like degradation complex believed to be a general protein degrading machinery. This is ATP-dependent protease subunit HslV from Magnetococcus marinus (strain ATCC BAA-1437 / JCM 17883 / MC-1).